Consider the following 274-residue polypeptide: N-acetylmuramic acid 6-phosphate etherase (274 aa).

In terms of domain architecture, SIS spans 54–217 (IIPRIDSGGR…STSVMIKLGR (164 aa)). E82 serves as the catalytic Proton donor. E113 is a catalytic residue.

The protein belongs to the GCKR-like family. MurNAc-6-P etherase subfamily. As to quaternary structure, homodimer.

It catalyses the reaction N-acetyl-D-muramate 6-phosphate + H2O = N-acetyl-D-glucosamine 6-phosphate + (R)-lactate. The protein operates within amino-sugar metabolism; N-acetylmuramate degradation. In terms of biological role, specifically catalyzes the cleavage of the D-lactyl ether substituent of MurNAc 6-phosphate, producing GlcNAc 6-phosphate and D-lactate. The polypeptide is N-acetylmuramic acid 6-phosphate etherase (Christiangramia forsetii (strain DSM 17595 / CGMCC 1.15422 / KT0803) (Gramella forsetii)).